We begin with the raw amino-acid sequence, 174 residues long: Shikimate kinase (174 aa).

14 to 19 contributes to the ATP binding site; sequence GAGKST. Mg(2+) is bound at residue Ser18. Positions 36, 60, and 82 each coordinate substrate. Arg120 serves as a coordination point for ATP. Arg141 contributes to the substrate binding site. Residue Arg158 participates in ATP binding.

The protein belongs to the shikimate kinase family. In terms of assembly, monomer. It depends on Mg(2+) as a cofactor.

The protein localises to the cytoplasm. The enzyme catalyses shikimate + ATP = 3-phosphoshikimate + ADP + H(+). It participates in metabolic intermediate biosynthesis; chorismate biosynthesis; chorismate from D-erythrose 4-phosphate and phosphoenolpyruvate: step 5/7. Its function is as follows. Catalyzes the specific phosphorylation of the 3-hydroxyl group of shikimic acid using ATP as a cosubstrate. In Buchnera aphidicola subsp. Baizongia pistaciae (strain Bp), this protein is Shikimate kinase.